We begin with the raw amino-acid sequence, 345 residues long: MGLLILGIESSCDETGVALVRSIGAARPRLLAHALHSQVQMHQAYGGVVPELASRDHIRRVLPLTTQVLRASGQRLADVDVLAYTRGPGLAGALLVGAGLACALAAALGKPVLGVHHLEGHLLSPFLSADPPEFPFVALLVSGGHTQLMRVDGVGRYALLGETIDDAAGEAFDKSAKLMGLGYPGGPALARLAEQGSATAFGLPRPLLHSGDLDFSFAGLKTAVLTQVRKLGDQLPARKADLAASTEAAIVQVLVKKTLAALRQTGLRRIVVAGGVGANRRLRQQLDAACADSGLRVHYPELALCTDNGAMIALAAAMRLQAGVQQAGTDYAFDVLPRWPLAASA.

His-117 and His-121 together coordinate Fe cation. Residues 140–144 (LVSGG), Asp-173, Gly-186, and Asn-279 contribute to the substrate site. Asp-307 is a binding site for Fe cation.

It belongs to the KAE1 / TsaD family. Fe(2+) serves as cofactor.

It is found in the cytoplasm. It carries out the reaction L-threonylcarbamoyladenylate + adenosine(37) in tRNA = N(6)-L-threonylcarbamoyladenosine(37) in tRNA + AMP + H(+). Functionally, required for the formation of a threonylcarbamoyl group on adenosine at position 37 (t(6)A37) in tRNAs that read codons beginning with adenine. Is involved in the transfer of the threonylcarbamoyl moiety of threonylcarbamoyl-AMP (TC-AMP) to the N6 group of A37, together with TsaE and TsaB. TsaD likely plays a direct catalytic role in this reaction. This Verminephrobacter eiseniae (strain EF01-2) protein is tRNA N6-adenosine threonylcarbamoyltransferase.